Consider the following 133-residue polypeptide: Large ribosomal subunit protein eL14 (133 aa).

Belongs to the eukaryotic ribosomal protein eL14 family.

The polypeptide is Large ribosomal subunit protein eL14 (Pisum sativum (Garden pea)).